An 801-amino-acid polypeptide reads, in one-letter code: Palmitoyl thioesterase CPT1C (801 aa).

At 1-49 (MAEAHQASSLLSSLSSDGAEVELSSSVWQEIYLSALRSWKRNLWRVWND) the chain is on the cytoplasmic side. Residues 50–70 (FLAGVVPATPLSWLFLFSTIQ) traverse the membrane as a helical segment. Residues 71–103 (LACLLQLDPSLGLMEKIKELLPDWGGQHHQLQG) are Mitochondrial intermembrane-facing. Residues 104-124 (LLAAAVFASCLWGTLIFTLHV) form a helical membrane-spanning segment. Over 125–801 (ALRLLLSHHG…PNIPKSSTNL (677 aa)) the chain is Cytoplasmic. His-469 acts as the Proton acceptor in catalysis. 551–563 (GKSFIKGCHVSSD) is a CoA binding site. Positions 585, 587, and 598 each coordinate (R)-carnitine. The required for interaction with GRIA1 stretch occupies residues 760 to 801 (LFQAGQQFKRQFTGLGESSGWKYSNLSCKTVDPNIPKSSTNL).

This sequence belongs to the carnitine/choline acetyltransferase family. In terms of assembly, peripherally associated with AMPAR complex. AMPAR complex consists of an inner core made of 4 pore-forming GluA/GRIA proteins (GRIA1, GRIA2, GRIA3 and GRIA4) and 4 major auxiliary subunits arranged in a twofold symmetry. One of the two pairs of distinct binding sites is occupied either by CNIH2, CNIH3 or CACNG2, CACNG3. The other harbors CACNG2, CACNG3, CACNG4, CACNG8 or GSG1L. This inner core of AMPAR complex is complemented by outer core constituents binding directly to the GluA/GRIA proteins at sites distinct from the interaction sites of the inner core constituents. Outer core constituents include at least PRRT1, PRRT2, CKAMP44/SHISA9, FRRS1L and NRN1. The proteins of the inner and outer core serve as a platform for other, more peripherally associated AMPAR constituents, including CPT1C. Alone or in combination, these auxiliary subunits control the gating and pharmacology of the AMPAR complex and profoundly impact their biogenesis and protein processing. Interacts with SACM1L; the interaction regulates SACM1L phosphatidylinositol-3-phosphatase activity and translocation to endoplasmic reticulum/trans Golgi network in a malonyl-CoA dependent manner. Interacts with ATL1. Expressed in brain (at protein level).

Its subcellular location is the synapse. It localises to the cell projection. It is found in the dendrite. The protein resides in the axon. The protein localises to the endoplasmic reticulum membrane. It carries out the reaction S-hexadecanoyl-L-cysteinyl-[protein] + H2O = L-cysteinyl-[protein] + hexadecanoate + H(+). Functionally, palmitoyl thioesterase specifically expressed in the endoplasmic reticulum of neurons. Modulates the trafficking of the glutamate receptor, AMPAR, to plasma membrane through depalmitoylation of GRIA1. Also regulates AMPR trafficking through the regulation of SACM1L phosphatidylinositol-3-phosphatase activity by interaction in a malonyl-CoA dependent manner. Binds malonyl-CoA and couples malonyl-CoA to ceramide levels, necessary for proper spine maturation and contributing to systemic energy homeostasis and appetite control. Binds to palmitoyl-CoA, but does not have carnitine palmitoyltransferase 1 catalytic activity or at very low levels. The sequence is that of Palmitoyl thioesterase CPT1C (Cpt1c) from Rattus norvegicus (Rat).